An 849-amino-acid polypeptide reads, in one-letter code: Membrane protein-large ribosomal subunit bL9 fusion protein (849 aa).

Residues 1–680 (MFSKNKHNTK…TQLEGTNIKT (680 aa)) form a unknown region. 2 helical membrane passes run 11 to 31 (FIVIACVIVVLILILFCFDFQ) and 64 to 84 (IIFFIFNFFGKIILASFIISF). Positions 214-342 (KTLAIAMIAF…GGDQVVVNIE (129 aa)) constitute a GGDEF domain. Positions 681-849 (VTDTLKHFLK…FLNVTERKSK (169 aa)) are large ribosomal subunit protein bL9.

It belongs to the bacterial ribosomal protein bL9 family.

Its subcellular location is the cell membrane. Functionally, binds to the 23S rRNA. The chain is Membrane protein-large ribosomal subunit bL9 fusion protein from Aster yellows witches'-broom phytoplasma (strain AYWB).